We begin with the raw amino-acid sequence, 1140 residues long: Chromosome partition protein Smc (1140 aa).

Residue P34 to N41 participates in ATP binding. The stretch at V160 to S484 forms a coiled coil. The 118-residue stretch at E502–L619 folds into the SMC hinge domain. Residues L660 to F990 are a coiled coil.

Belongs to the SMC family. Homodimer.

It localises to the cytoplasm. Its function is as follows. Required for chromosome condensation and partitioning. The sequence is that of Chromosome partition protein Smc from Thermoplasma acidophilum (strain ATCC 25905 / DSM 1728 / JCM 9062 / NBRC 15155 / AMRC-C165).